The sequence spans 155 residues: Endoribonuclease YbeY (155 aa).

3 residues coordinate Zn(2+): His-120, His-124, and His-130.

It belongs to the endoribonuclease YbeY family. Requires Zn(2+) as cofactor.

The protein resides in the cytoplasm. In terms of biological role, single strand-specific metallo-endoribonuclease involved in late-stage 70S ribosome quality control and in maturation of the 3' terminus of the 16S rRNA. This is Endoribonuclease YbeY from Staphylococcus aureus (strain bovine RF122 / ET3-1).